Reading from the N-terminus, the 341-residue chain is Putative UPF0607 protein ENSP00000383783 (341 aa).

The span at 75-101 (EVRAEEPKEATEVKDQVETQGQEDNKR) shows a compositional bias: basic and acidic residues. Disordered stretches follow at residues 75–115 (EVRA…TSSL) and 216–278 (GLLM…PPPA). Residues 234 to 245 (SSRSSPSRAASH) show a composition bias toward low complexity.

It belongs to the UPF0607 family.

The polypeptide is Putative UPF0607 protein ENSP00000383783 (Homo sapiens (Human)).